A 118-amino-acid chain; its full sequence is UPF0102 protein lpg2994 (118 aa).

The protein belongs to the UPF0102 family.

This chain is UPF0102 protein lpg2994, found in Legionella pneumophila subsp. pneumophila (strain Philadelphia 1 / ATCC 33152 / DSM 7513).